We begin with the raw amino-acid sequence, 619 residues long: Chaperone protein HscA homolog (619 aa).

It belongs to the heat shock protein 70 family.

Its function is as follows. Chaperone involved in the maturation of iron-sulfur cluster-containing proteins. Has a low intrinsic ATPase activity which is markedly stimulated by HscB. The chain is Chaperone protein HscA homolog from Haemophilus influenzae (strain PittEE).